We begin with the raw amino-acid sequence, 258 residues long: Phosphate import ATP-binding protein PstB (258 aa).

Residues 13–253 (IKIENLNLWY…PREKSTEDYI (241 aa)) form the ABC transporter domain. Residue 45–52 (GPSGCGKS) participates in ATP binding.

Belongs to the ABC transporter superfamily. Phosphate importer (TC 3.A.1.7) family. In terms of assembly, the complex is composed of two ATP-binding proteins (PstB), two transmembrane proteins (PstC and PstA) and a solute-binding protein (PstS).

It is found in the cell membrane. The enzyme catalyses phosphate(out) + ATP + H2O = ADP + 2 phosphate(in) + H(+). Part of the ABC transporter complex PstSACB involved in phosphate import. Responsible for energy coupling to the transport system. In Methanosarcina barkeri (strain Fusaro / DSM 804), this protein is Phosphate import ATP-binding protein PstB.